The primary structure comprises 130 residues: Small ribosomal subunit protein uS9 (130 aa).

Belongs to the universal ribosomal protein uS9 family.

In Pseudomonas aeruginosa (strain LESB58), this protein is Small ribosomal subunit protein uS9.